Consider the following 557-residue polypeptide: 2-succinyl-5-enolpyruvyl-6-hydroxy-3-cyclohexene-1-carboxylate synthase (557 aa).

It belongs to the TPP enzyme family. MenD subfamily. Homodimer. Requires Mg(2+) as cofactor. It depends on Mn(2+) as a cofactor. Thiamine diphosphate serves as cofactor.

It carries out the reaction isochorismate + 2-oxoglutarate + H(+) = 5-enolpyruvoyl-6-hydroxy-2-succinyl-cyclohex-3-ene-1-carboxylate + CO2. It functions in the pathway quinol/quinone metabolism; 1,4-dihydroxy-2-naphthoate biosynthesis; 1,4-dihydroxy-2-naphthoate from chorismate: step 2/7. The protein operates within quinol/quinone metabolism; menaquinone biosynthesis. Catalyzes the thiamine diphosphate-dependent decarboxylation of 2-oxoglutarate and the subsequent addition of the resulting succinic semialdehyde-thiamine pyrophosphate anion to isochorismate to yield 2-succinyl-5-enolpyruvyl-6-hydroxy-3-cyclohexene-1-carboxylate (SEPHCHC). The polypeptide is 2-succinyl-5-enolpyruvyl-6-hydroxy-3-cyclohexene-1-carboxylate synthase (Phocaeicola vulgatus (strain ATCC 8482 / DSM 1447 / JCM 5826 / CCUG 4940 / NBRC 14291 / NCTC 11154) (Bacteroides vulgatus)).